The sequence spans 30 residues: Conopeptide Vi002 (30 aa).

In terms of tissue distribution, expressed by the venom gland.

It localises to the secreted. The sequence is that of Conopeptide Vi002 from Conus virgo (Virgin cone).